A 155-amino-acid chain; its full sequence is Ribosomal RNA large subunit methyltransferase H (155 aa).

Leu72 and Gly104 together coordinate S-adenosyl-L-methionine.

It belongs to the RNA methyltransferase RlmH family. As to quaternary structure, homodimer.

Its subcellular location is the cytoplasm. It carries out the reaction pseudouridine(1915) in 23S rRNA + S-adenosyl-L-methionine = N(3)-methylpseudouridine(1915) in 23S rRNA + S-adenosyl-L-homocysteine + H(+). In terms of biological role, specifically methylates the pseudouridine at position 1915 (m3Psi1915) in 23S rRNA. The protein is Ribosomal RNA large subunit methyltransferase H of Fusobacterium nucleatum subsp. nucleatum (strain ATCC 25586 / DSM 15643 / BCRC 10681 / CIP 101130 / JCM 8532 / KCTC 2640 / LMG 13131 / VPI 4355).